The chain runs to 566 residues: MRLLNRLNQYQRLWQPSAGKPQTVTVSELAERCFCSERHVRTLLRQAQEAGWLEWQAQSGRGKRGQLRFLVTPESLRNAMMEQALETGKQQDVLELAQLAPGELRTLLQPFMGGQWQNDTPTLRIPYYRPLEPLQPGFLPGRAEQHLAGQIFSGLTRFDNNTQRPIGDLAHHWETSTDGLRWDFYLRSTLHWHNGDAVKASHLHQRLLMLLQLPALDQLFISVKRIEVTHPQCLTFFLHRPDYWLAHRLASYCSHLAHPQFPLIGTGPFRLTQFTAELVRLESHDYYHLRHPLLKAVEYWITPPLFEKDLGTSCRHPVQITIGKPEELQRVSQVSSGISLGFCYLTLRKSPRLSLWQARKVISIIHQSGLLQTLEVGENLITASHALLPGWTIPHWQVPDEVKLPKTLTLVYHLPIELHTMAERLQATLAAEGCELTIIFHNAKNWDDTTLQAHADLMMGDRLIGEAPEYTLEQWLRCDPLWPHVFDAPAYAHLQSTLDAVQIMPDEENRFNALKAVFSQLMTDATLTPLFNYHYRISAPPGVNGVRLTPRGWFEFTEAWLPAPSQ.

This is an uncharacterized protein from Escherichia coli (strain K12).